The sequence spans 176 residues: ATP-dependent protease subunit HslV (176 aa).

Thr-2 is an active-site residue. Residues Gly-157, Cys-160, and Thr-163 each coordinate Na(+).

It belongs to the peptidase T1B family. HslV subfamily. As to quaternary structure, a double ring-shaped homohexamer of HslV is capped on each side by a ring-shaped HslU homohexamer. The assembly of the HslU/HslV complex is dependent on binding of ATP.

It localises to the cytoplasm. It catalyses the reaction ATP-dependent cleavage of peptide bonds with broad specificity.. With respect to regulation, allosterically activated by HslU binding. Protease subunit of a proteasome-like degradation complex believed to be a general protein degrading machinery. This Escherichia coli O139:H28 (strain E24377A / ETEC) protein is ATP-dependent protease subunit HslV.